A 498-amino-acid polypeptide reads, in one-letter code: U4/U6 small nuclear ribonucleoprotein Prp31 (498 aa).

Residues 1-24 are disordered; the sequence is MSLADELLADLEEAAEEEEENLID. The segment covering 7 to 24 has biased composition (acidic residues); sequence LLADLEEAAEEEEENLID. Coiled-coil stretches lie at residues 84 to 119 and 180 to 214; these read EAAP…KYSK and DEEL…MSFI. Residues 214-332 enclose the Nop domain; the sequence is IAPNLSIIVG…IERKFDKWQE (119 aa). The disordered stretch occupies residues 333–356; it reads PPPVKQVKPLPAPLDGQRKKRGGR. The short motif at 350–363 is the Nuclear localization signal (NLS) element; that stretch reads RKKRGGRRYRKMKE.

This sequence belongs to the PRP31 family. As to quaternary structure, identified in the spliceosome B complex. Component of the U4/U6-U5 tri-snRNP complex. Component of some MLL1/MLL complex.

Its subcellular location is the nucleus. The protein resides in the nucleus speckle. It is found in the cajal body. In terms of biological role, involved in pre-mRNA splicing as component of the spliceosome. Required for the assembly of the U4/U5/U6 tri-snRNP complex, one of the building blocks of the spliceosome. This chain is U4/U6 small nuclear ribonucleoprotein Prp31 (prpf31), found in Xenopus laevis (African clawed frog).